Reading from the N-terminus, the 583-residue chain is Aspartate--tRNA ligase (583 aa).

Glu174 is an L-aspartate binding site. The tract at residues 198–201 (QITK) is aspartate. Arg220 contacts L-aspartate. ATP-binding positions include 220–222 (RDE) and Gln229. Residue His443 participates in L-aspartate binding. Glu477 serves as a coordination point for ATP. An L-aspartate-binding site is contributed by Arg484. 529–532 (GLDR) provides a ligand contact to ATP.

This sequence belongs to the class-II aminoacyl-tRNA synthetase family. Type 1 subfamily. In terms of assembly, homodimer.

The protein localises to the cytoplasm. The catalysed reaction is tRNA(Asp) + L-aspartate + ATP = L-aspartyl-tRNA(Asp) + AMP + diphosphate. Its function is as follows. Catalyzes the attachment of L-aspartate to tRNA(Asp) in a two-step reaction: L-aspartate is first activated by ATP to form Asp-AMP and then transferred to the acceptor end of tRNA(Asp). This chain is Aspartate--tRNA ligase, found in Streptococcus thermophilus (strain ATCC BAA-250 / LMG 18311).